The following is a 330-amino-acid chain: Ketol-acid reductoisomerase (NADP(+)) (330 aa).

The KARI N-terminal Rossmann domain maps to 2 to 182 (ARLYYDTDAN…GGTRAGILET (181 aa)). Residues 25-28 (YGSQ), S51, S53, and 83-86 (DEVQ) each bind NADP(+). The active site involves H108. G134 lines the NADP(+) pocket. One can recognise a KARI C-terminal knotted domain in the interval 183–328 (TFREETETDL…RELRAMFSWL (146 aa)). 4 residues coordinate Mg(2+): D191, E195, E227, and E231. S252 contributes to the substrate binding site.

The protein belongs to the ketol-acid reductoisomerase family. It depends on Mg(2+) as a cofactor.

The catalysed reaction is (2R)-2,3-dihydroxy-3-methylbutanoate + NADP(+) = (2S)-2-acetolactate + NADPH + H(+). The enzyme catalyses (2R,3R)-2,3-dihydroxy-3-methylpentanoate + NADP(+) = (S)-2-ethyl-2-hydroxy-3-oxobutanoate + NADPH + H(+). Its pathway is amino-acid biosynthesis; L-isoleucine biosynthesis; L-isoleucine from 2-oxobutanoate: step 2/4. The protein operates within amino-acid biosynthesis; L-valine biosynthesis; L-valine from pyruvate: step 2/4. Its function is as follows. Involved in the biosynthesis of branched-chain amino acids (BCAA). Catalyzes an alkyl-migration followed by a ketol-acid reduction of (S)-2-acetolactate (S2AL) to yield (R)-2,3-dihydroxy-isovalerate. In the isomerase reaction, S2AL is rearranged via a Mg-dependent methyl migration to produce 3-hydroxy-3-methyl-2-ketobutyrate (HMKB). In the reductase reaction, this 2-ketoacid undergoes a metal-dependent reduction by NADPH to yield (R)-2,3-dihydroxy-isovalerate. The polypeptide is Ketol-acid reductoisomerase (NADP(+)) (Synechococcus sp. (strain JA-2-3B'a(2-13)) (Cyanobacteria bacterium Yellowstone B-Prime)).